A 94-amino-acid polypeptide reads, in one-letter code: Trp operon repressor homolog (94 aa).

The DNA-binding element occupies 58–81 (QREIAEKYGVSIAQITRGSNALKG).

It belongs to the TrpR family. In terms of assembly, homodimer.

It is found in the cytoplasm. This protein is an aporepressor. When complexed with L-tryptophan it binds the operator region of the trp operon and prevents the initiation of transcription. This Chlamydia trachomatis serovar A (strain ATCC VR-571B / DSM 19440 / HAR-13) protein is Trp operon repressor homolog.